We begin with the raw amino-acid sequence, 203 residues long: Inosine triphosphate pyrophosphatase (203 aa).

Residue 13-18 (TGNAKK) coordinates ITP. Glu43 is a binding site for Mg(2+). Residues Lys55, 71 to 72 (DT), Lys88, 147 to 150 (FGWD), Lys170, and 175 to 176 (HR) contribute to the ITP site.

This sequence belongs to the HAM1 NTPase family. Homodimer. Mg(2+) serves as cofactor. The cofactor is Mn(2+).

It localises to the cytoplasm. The catalysed reaction is ITP + H2O = IMP + diphosphate + H(+). It carries out the reaction dITP + H2O = dIMP + diphosphate + H(+). The enzyme catalyses XTP + H2O = XMP + diphosphate + H(+). It catalyses the reaction N(6)-hydroxy-dATP + H2O = N(6)-hydroxy-dAMP + diphosphate + H(+). Pyrophosphatase that hydrolyzes the non-canonical purine nucleotides inosine triphosphate (ITP), deoxyinosine triphosphate (dITP) as well as 2'-deoxy-N-6-hydroxylaminopurine triphosphate (dHAPTP) and xanthosine 5'-triphosphate (XTP) to their respective monophosphate derivatives. The enzyme does not distinguish between the deoxy- and ribose forms. Probably excludes non-canonical purines from RNA and DNA precursor pools, thus preventing their incorporation into RNA and DNA and avoiding chromosomal lesions. This chain is Inosine triphosphate pyrophosphatase (itpa), found in Danio rerio (Zebrafish).